The sequence spans 82 residues: Penaeidin-3b (82 aa).

The first 19 residues, 1–19 (MRLVVCLVFLASFALVCQG), serve as a signal peptide directing secretion. Gln20 bears the Pyrrolidone carboxylic acid mark. 3 cysteine pairs are disulfide-bonded: Cys51/Cys66, Cys55/Cys73, and Cys67/Cys74. The residue at position 81 (Ser81) is a Serine amide.

The protein belongs to the penaeidin family. As to expression, higher expression in hemocytes and to a lesser extent in heart, testis, gills, intestine, lymphoid organ and hepatopancreas. Traces in eyes and subcuticular epithelium. Not present in the brain.

Its subcellular location is the cytoplasmic granule. Its function is as follows. Antibacterial activity against M.luteus and E.coli bacteria. Antifungal activity against N.crassa and F.oxysporum. Presents chitin-binding activity. In Penaeus vannamei (Whiteleg shrimp), this protein is Penaeidin-3b.